The following is a 582-amino-acid chain: BTB/POZ domain and ankyrin repeat-containing protein NPR1 (582 aa).

The segment covering 1 to 12 has biased composition (polar residues); that stretch reads MEPPTSHVTNAF. A disordered region spans residues 1 to 27; the sequence is MEPPTSHVTNAFSDSDSASVEEGDADA. Residues 55–140 form the BTB domain; sequence ADARIAVPGG…VLDYLYSGRV (86 aa). The C2HC NPR-type zinc-finger motif lies at 147 to 161; it reads ACLCVDEDCAHVGCH. Zn(2+) is bound by residues C150, C155, H157, and C160. ANK repeat units lie at residues 229–258, 269–299, 301–328, and 332–361; these read RSNL…SLGL, KHVR…NLDD, FALH…DVNH, and RGYT…RPAD. The segment at 391-526 is salicylic acid-binding core (SBC); the sequence is PSPKDRLCIE…VLDKIMDDET (136 aa). R436 is a binding site for salicylate. 2 disordered regions span residues 525 to 544 and 551 to 582; these read ETDP…KRFH and QKAF…RPRR. A compositionally biased stretch (basic and acidic residues) spans 553-563; that stretch reads AFHEDKEENDR. Over residues 564-574 the composition is skewed to low complexity; sequence SGLSSSSSSTS.

This sequence belongs to the plant 'ANKYRIN-BTB/POZ' family. 'NPR1-like' subfamily. As to quaternary structure, oligomer in an uninduced state; disulfide-linked. Forms activated monomer upon changes in cellular redox potential. Interacts with TGA2.2. Interacts with NRR.

It is found in the cytoplasm. The protein localises to the nucleus. Its subcellular location is the nuclear body. Its pathway is protein modification; protein ubiquitination. Salicylic acid (SA)-binding substrate-specific adapter of an E3 ubiquitin-protein ligase complex (CUL3-RBX1-BTB) which mediates the ubiquitination and subsequent proteasomal degradation of target proteins. Transcription cofactor that represses gene expression in the absence of salicylic acid (SA), when attached to negative cis-elements (W-box) with WRKY transcription factors, but stimulates gene expression upon activation by SA, when sumoylated and attached to positive cis-elements (as-1) with TGA transcription factors, thus confering immunity through a series of gene regulations ending in a significant increase in antimicrobial and defense genes expression. Key positive factor of disease resistance. Involved in defense response against the bacterial blight disease caused by Xanthomonas oryzae pv. oryzae (Xoo). Plants over-expressing NPR1/NH1 acquire high levels of resistance to Xoo, express constitutively defense genes and develop lesion-mimic spots on leaves at pre-flowering stage. Involved in basal resistance to the blast pathogen Magnaporthe oryzae. Plants over-expressing NPR1/NH1 have increased resistance to M.oryzae infection. Plays an essential role in benzothiadiazole (BTH)-induced resistance to the blast fungus disease caused by Magnaporthe oryzae. Functions as a transcriptional coactivator of TGA2.1 and LG2 in vitro. Involved in defense response against herbivore. Plants silencing NPR1/NH1 have increased herbivore-induced trypsin proteinase inhibitors and volatiles, which reduces the performance of the striped stem borer (SSB) Chilo suppressalis. The polypeptide is BTB/POZ domain and ankyrin repeat-containing protein NPR1 (Oryza sativa subsp. indica (Rice)).